The chain runs to 242 residues: 7-cyano-7-deazaguanine synthase (242 aa).

A disordered region spans residues 1-25 (MNSRKDKNSKGKNSDTKRKKSSQEN). An ATP-binding site is contributed by 32-42 (LSGGLDSTTCL). The Zn(2+) site is built by cysteine 212, cysteine 221, cysteine 224, and cysteine 227.

This sequence belongs to the QueC family. Zn(2+) is required as a cofactor.

It carries out the reaction 7-carboxy-7-deazaguanine + NH4(+) + ATP = 7-cyano-7-deazaguanine + ADP + phosphate + H2O + H(+). Its pathway is purine metabolism; 7-cyano-7-deazaguanine biosynthesis. Functionally, catalyzes the ATP-dependent conversion of 7-carboxy-7-deazaguanine (CDG) to 7-cyano-7-deazaguanine (preQ(0)). The polypeptide is 7-cyano-7-deazaguanine synthase (Leptospira borgpetersenii serovar Hardjo-bovis (strain JB197)).